A 447-amino-acid chain; its full sequence is Signal recognition particle 54 kDa protein (447 aa).

GTP-binding positions include 105–112, 187–191, and 247–250; these read GVQGSGKT, DTAGR, and TKMD.

It belongs to the GTP-binding SRP family. SRP54 subfamily. As to quaternary structure, part of the signal recognition particle protein translocation system, which is composed of SRP and FtsY. Archaeal SRP consists of a 7S RNA molecule of 300 nucleotides and two protein subunits: SRP54 and SRP19.

It localises to the cytoplasm. It carries out the reaction GTP + H2O = GDP + phosphate + H(+). In terms of biological role, involved in targeting and insertion of nascent membrane proteins into the cytoplasmic membrane. Binds to the hydrophobic signal sequence of the ribosome-nascent chain (RNC) as it emerges from the ribosomes. The SRP-RNC complex is then targeted to the cytoplasmic membrane where it interacts with the SRP receptor FtsY. This chain is Signal recognition particle 54 kDa protein, found in Hyperthermus butylicus (strain DSM 5456 / JCM 9403 / PLM1-5).